The primary structure comprises 226 residues: RNA pyrophosphohydrolase (226 aa).

The Nudix hydrolase domain occupies Gly6 to Thr149. The short motif at Gly38 to Gly59 is the Nudix box element. Residues Met197–Gly226 are disordered.

It belongs to the Nudix hydrolase family. RppH subfamily. The cofactor is a divalent metal cation.

In terms of biological role, accelerates the degradation of transcripts by removing pyrophosphate from the 5'-end of triphosphorylated RNA, leading to a more labile monophosphorylated state that can stimulate subsequent ribonuclease cleavage. This Paracidovorax citrulli (strain AAC00-1) (Acidovorax citrulli) protein is RNA pyrophosphohydrolase.